We begin with the raw amino-acid sequence, 246 residues long: 1-(5-phosphoribosyl)-5-[(5-phosphoribosylamino)methylideneamino] imidazole-4-carboxamide isomerase (246 aa).

The Proton acceptor role is filled by aspartate 8. Catalysis depends on aspartate 131, which acts as the Proton donor.

It belongs to the HisA/HisF family.

Its subcellular location is the cytoplasm. The catalysed reaction is 1-(5-phospho-beta-D-ribosyl)-5-[(5-phospho-beta-D-ribosylamino)methylideneamino]imidazole-4-carboxamide = 5-[(5-phospho-1-deoxy-D-ribulos-1-ylimino)methylamino]-1-(5-phospho-beta-D-ribosyl)imidazole-4-carboxamide. It participates in amino-acid biosynthesis; L-histidine biosynthesis; L-histidine from 5-phospho-alpha-D-ribose 1-diphosphate: step 4/9. The chain is 1-(5-phosphoribosyl)-5-[(5-phosphoribosylamino)methylideneamino] imidazole-4-carboxamide isomerase from Bordetella avium (strain 197N).